A 147-amino-acid chain; its full sequence is Acidic phospholipase A2 S9-53F (147 aa).

The first 19 residues, 1-19, serve as a signal peptide directing secretion; that stretch reads MYPAHLLVLLAVCVSLLGA. A propeptide spanning residues 20-27 is cleaved from the precursor; it reads SDIPPQPL. Intrachain disulfides connect Cys38-Cys99, Cys54-Cys146, Cys56-Cys72, Cys71-Cys127, Cys78-Cys120, Cys88-Cys113, and Cys106-Cys118. Residues Tyr55, Gly57, and Gly59 each coordinate Ca(2+). The active site involves His75. Asp76 provides a ligand contact to Ca(2+). Asp121 is an active-site residue.

It belongs to the phospholipase A2 family. Group I subfamily. D49 sub-subfamily. The cofactor is Ca(2+). In terms of tissue distribution, expressed by the venom gland.

Its subcellular location is the secreted. It catalyses the reaction a 1,2-diacyl-sn-glycero-3-phosphocholine + H2O = a 1-acyl-sn-glycero-3-phosphocholine + a fatty acid + H(+). Its function is as follows. Snake venom phospholipase A2 (PLA2) that inhibits collagen-induced platelet aggregation. PLA2 catalyzes the calcium-dependent hydrolysis of the 2-acyl groups in 3-sn-phosphoglycerides. This Austrelaps superbus (Lowland copperhead snake) protein is Acidic phospholipase A2 S9-53F.